The chain runs to 116 residues: Iron-sulfur cluster insertion protein ErpA (116 aa).

3 residues coordinate iron-sulfur cluster: Cys-44, Cys-108, and Cys-110.

This sequence belongs to the HesB/IscA family. Homodimer. Requires iron-sulfur cluster as cofactor.

Functionally, required for insertion of 4Fe-4S clusters for at least IspG. In Pseudomonas entomophila (strain L48), this protein is Iron-sulfur cluster insertion protein ErpA.